Here is a 1057-residue protein sequence, read N- to C-terminus: Carbamoyl phosphate synthase large chain (1057 aa).

Residues Met-1 to Glu-401 form a carboxyphosphate synthetic domain region. ATP is bound by residues Arg-129, Arg-169, Gly-175, Gly-176, Lys-208, Ile-210, Glu-215, Gly-241, Ile-242, His-243, Gln-284, and Glu-298. Positions Arg-133–Val-327 constitute an ATP-grasp 1 domain. Mg(2+) contacts are provided by Gln-284, Glu-298, and Asn-300. Mn(2+) contacts are provided by Gln-284, Glu-298, and Asn-300. Residues Tyr-402 to Ser-546 form an oligomerization domain region. The tract at residues Val-547–Gly-929 is carbamoyl phosphate synthetic domain. An ATP-grasp 2 domain is found at Glu-671–Leu-861. Positions 707, 746, 748, 752, 777, 778, 779, 780, 820, and 832 each coordinate ATP. Residues Gln-820, Glu-832, and Asn-834 each contribute to the Mg(2+) site. Positions 820, 832, and 834 each coordinate Mn(2+). In terms of domain architecture, MGS-like spans Val-930 to Met-1057. The tract at residues Val-930–Met-1057 is allosteric domain.

It belongs to the CarB family. In terms of assembly, composed of two chains; the small (or glutamine) chain promotes the hydrolysis of glutamine to ammonia, which is used by the large (or ammonia) chain to synthesize carbamoyl phosphate. Tetramer of heterodimers (alpha,beta)4. Mg(2+) serves as cofactor. The cofactor is Mn(2+).

The catalysed reaction is hydrogencarbonate + L-glutamine + 2 ATP + H2O = carbamoyl phosphate + L-glutamate + 2 ADP + phosphate + 2 H(+). The enzyme catalyses hydrogencarbonate + NH4(+) + 2 ATP = carbamoyl phosphate + 2 ADP + phosphate + 2 H(+). It participates in amino-acid biosynthesis; L-arginine biosynthesis; carbamoyl phosphate from bicarbonate: step 1/1. Its pathway is pyrimidine metabolism; UMP biosynthesis via de novo pathway; (S)-dihydroorotate from bicarbonate: step 1/3. Large subunit of the glutamine-dependent carbamoyl phosphate synthetase (CPSase). CPSase catalyzes the formation of carbamoyl phosphate from the ammonia moiety of glutamine, carbonate, and phosphate donated by ATP, constituting the first step of 2 biosynthetic pathways, one leading to arginine and/or urea and the other to pyrimidine nucleotides. The large subunit (synthetase) binds the substrates ammonia (free or transferred from glutamine from the small subunit), hydrogencarbonate and ATP and carries out an ATP-coupled ligase reaction, activating hydrogencarbonate by forming carboxy phosphate which reacts with ammonia to form carbamoyl phosphate. This Staphylococcus carnosus (strain TM300) protein is Carbamoyl phosphate synthase large chain.